We begin with the raw amino-acid sequence, 251 residues long: Imidazole glycerol phosphate synthase subunit HisF (251 aa).

Residues aspartate 11 and aspartate 130 contribute to the active site.

The protein belongs to the HisA/HisF family. Heterodimer of HisH and HisF.

It is found in the cytoplasm. It carries out the reaction 5-[(5-phospho-1-deoxy-D-ribulos-1-ylimino)methylamino]-1-(5-phospho-beta-D-ribosyl)imidazole-4-carboxamide + L-glutamine = D-erythro-1-(imidazol-4-yl)glycerol 3-phosphate + 5-amino-1-(5-phospho-beta-D-ribosyl)imidazole-4-carboxamide + L-glutamate + H(+). It participates in amino-acid biosynthesis; L-histidine biosynthesis; L-histidine from 5-phospho-alpha-D-ribose 1-diphosphate: step 5/9. In terms of biological role, IGPS catalyzes the conversion of PRFAR and glutamine to IGP, AICAR and glutamate. The HisF subunit catalyzes the cyclization activity that produces IGP and AICAR from PRFAR using the ammonia provided by the HisH subunit. The sequence is that of Imidazole glycerol phosphate synthase subunit HisF from Metallosphaera sedula (strain ATCC 51363 / DSM 5348 / JCM 9185 / NBRC 15509 / TH2).